We begin with the raw amino-acid sequence, 417 residues long: Carboxypeptidase A2 (417 aa).

Residues 1 to 16 form the signal peptide; that stretch reads MRLTLLLAALLGYIYC. The propeptide at 17–112 is activation peptide; the sequence is QETFVGDQVL…EMLFNQQRER (96 aa). Positions 120 to 412 constitute a Peptidase M14 domain; sequence AYHTLEEIYQ…LGLKTIMEHV (293 aa). His-177 and Glu-180 together coordinate Zn(2+). Substrate-binding positions include 177-180, Arg-235, and 252-253; these read HARE and NR. A disulfide bridge connects residues Cys-246 and Cys-269. His-304 contacts Zn(2+). 305–306 is a substrate binding site; sequence SY. Residues Cys-318 and Cys-352 are joined by a disulfide bond. A substrate-binding site is contributed by Tyr-356. Glu-378 acts as the Proton donor/acceptor in catalysis.

Belongs to the peptidase M14 family. Zn(2+) is required as a cofactor.

Its subcellular location is the secreted. It carries out the reaction Similar to that of carboxypeptidase A (EC 3.4.17.1), but with a preference for bulkier C-terminal residues.. In terms of biological role, carboxypeptidase that catalyzes the release of a C-terminal amino acid, with a preference for large aromatic C-terminal residues. The chain is Carboxypeptidase A2 (Cpa2) from Rattus norvegicus (Rat).